The following is an 834-amino-acid chain: Periplasmic nitrate reductase (834 aa).

The segment at residues 1 to 31 (MSSELTRRNLLKAHAAGIAAATAGIALPAAA) is a signal peptide (tat-type signal). Positions 43–99 (IKWSKAPCRFCGTGCGVMVGVKEGKVVATHGDMQAEVNRGLNCIKGYFLSKIMYGKD) constitute a 4Fe-4S Mo/W bis-MGD-type domain. 4 residues coordinate [4Fe-4S] cluster: cysteine 50, cysteine 53, cysteine 57, and cysteine 85. Residues lysine 87, glutamine 154, asparagine 179, cysteine 183, 216–223 (WGSNMAEM), 247–251 (STFTH), 266–268 (GTD), methionine 377, glutamine 381, asparagine 487, 513–514 (SD), lysine 536, aspartate 563, and 723–732 (TGRVLEHWHS) contribute to the Mo-bis(molybdopterin guanine dinucleotide) site. Residue tryptophan 799 coordinates substrate. The Mo-bis(molybdopterin guanine dinucleotide) site is built by asparagine 807 and lysine 824.

This sequence belongs to the prokaryotic molybdopterin-containing oxidoreductase family. NasA/NapA/NarB subfamily. In terms of assembly, component of the periplasmic nitrate reductase NapAB complex composed of NapA and NapB. [4Fe-4S] cluster serves as cofactor. It depends on Mo-bis(molybdopterin guanine dinucleotide) as a cofactor. Predicted to be exported by the Tat system. The position of the signal peptide cleavage has not been experimentally proven.

The protein localises to the periplasm. The enzyme catalyses 2 Fe(II)-[cytochrome] + nitrate + 2 H(+) = 2 Fe(III)-[cytochrome] + nitrite + H2O. In terms of biological role, catalytic subunit of the periplasmic nitrate reductase complex NapAB. Receives electrons from NapB and catalyzes the reduction of nitrate to nitrite. This is Periplasmic nitrate reductase from Agrobacterium fabrum (strain C58 / ATCC 33970) (Agrobacterium tumefaciens (strain C58)).